The sequence spans 1799 residues: Bromodomain and WD repeat-containing protein 3 (1799 aa).

WD repeat units lie at residues 170–209 (IKMH…IWAT), 213–251 (RLLA…VWCL), 255–297 (APVA…FWQW), 307–347 (RPVK…IYYL), 353–393 (EKIA…IWQY), 400–452 (SIVL…VWNS), 456–495 (QLLH…IWDL), and 502–542 (RNYF…LFGF). Position 693 is a phosphoserine (serine 693). The disordered stretch occupies residues 766-912 (KKPSYPIQRN…KKKKGGLVSM (147 aa)). Residues 784–794 (SLRRTQRKRQH) show a composition bias toward basic residues. Polar residues predominate over residues 795 to 816 (TYLTRSNIEHNSQASSQTSGVQ). The span at 817-828 (EDSDSSSEEDET) shows a compositional bias: acidic residues. The segment covering 845 to 858 (SESSSSDSSSEYSD) has biased composition (low complexity). The span at 875–884 (RQATQKIYSS) shows a compositional bias: polar residues. Serine 884 and serine 885 each carry phosphoserine. Basic residues predominate over residues 897 to 907 (KKPKQTKKKKG). The Bromo 1 domain maps to 1136–1243 (WGAHSRDEEC…DVLLRFIGDQ (108 aa)). Disordered regions lie at residues 1258 to 1291 (EDPD…KCRG), 1321 to 1366 (EPFR…IDTP), 1435 to 1482 (IQSQ…QNTS), and 1517 to 1723 (SPSS…AKRA). Over residues 1260-1276 (PDSSDLEEDSEMVDLDS) the composition is skewed to acidic residues. The 130-residue stretch at 1298–1427 (CNPDAWKKQC…ALFENHIKNI (130 aa)) folds into the Bromo 2 domain. Residues 1333–1348 (PVQQQQEGESSQSVPP) show a composition bias toward low complexity. Residues 1438-1450 (QKRRRPRYRKRLR) show a composition bias toward basic residues. 2 stretches are compositionally biased toward low complexity: residues 1451–1463 (SSSS…RAPS) and 1517–1530 (SPSS…SGNS). Residues serine 1574 and serine 1576 each carry the phosphoserine modification. A compositionally biased stretch (basic and acidic residues) spans 1584–1596 (GEEKEMKETKEQV). Positions 1598 to 1623 (LSSSESGELGSSLSSESTSGSDSDSE) are enriched in low complexity. A compositionally biased stretch (basic and acidic residues) spans 1624–1640 (STSRTDQDYVDGDHDYS). 2 stretches are compositionally biased toward basic residues: residues 1646-1663 (RPKR…RNWK) and 1681-1694 (RGGR…RGGR). Position 1760 is a phosphoserine (serine 1760).

Plays a role in the regulation of cell morphology and cytoskeletal organization. Required in the control of cell shape. The chain is Bromodomain and WD repeat-containing protein 3 (Brwd3) from Mus musculus (Mouse).